A 530-amino-acid polypeptide reads, in one-letter code: UDP-glucuronosyltransferase 2B14 (530 aa).

The N-terminal stretch at 1–24 (MSVKHVSVLLLLLQLSCCFRTGSC) is a signal peptide. 2 N-linked (GlcNAc...) asparagine glycosylation sites follow: asparagine 134 and asparagine 316. A helical membrane pass occupies residues 494–510 (VVGFLVSCAAFLIFLVI).

The protein belongs to the UDP-glycosyltransferase family.

The protein localises to the microsome membrane. It localises to the endoplasmic reticulum membrane. It carries out the reaction glucuronate acceptor + UDP-alpha-D-glucuronate = acceptor beta-D-glucuronoside + UDP + H(+). UDPGT is of major importance in the conjugation and subsequent elimination of potentially toxic xenobiotics and endogenous compounds. The chain is UDP-glucuronosyltransferase 2B14 (UGT2B14) from Oryctolagus cuniculus (Rabbit).